Reading from the N-terminus, the 260-residue chain is Dehydrin ERD10 (260 aa).

Disordered stretches follow at residues Met1–Lys187, Lys197–Leu216, and Lys240–Asp260. At Ala2 the chain carries N-acetylalanine. A compositionally biased stretch (basic and acidic residues) spans Glu26–Pro44. A Phosphoserine modification is found at Ser61. Basic and acidic residues-rich tracts occupy residues Val67–His102, Ile130–Glu140, Asp148–Gly162, Ser176–Lys187, and Lys197–Asp207. A run of 2 repeats spans residues Glu184 to Lys204 and Pro227 to Lys247. The 2 X 21 AA repeats, Lys-rich stretch occupies residues Glu184 to Lys247.

The protein belongs to the plant dehydrin family. In terms of tissue distribution, in stems, cauline leaves, roots and flowers. Low levels found in maturing seeds. Absent in dry seeds.

The sequence is that of Dehydrin ERD10 (ERD10) from Arabidopsis thaliana (Mouse-ear cress).